A 423-amino-acid polypeptide reads, in one-letter code: Mannose-6-phosphate isomerase (423 aa).

A2 carries the post-translational modification N-acetylalanine. Residues S102 and S108 each carry the phosphoserine modification. Zn(2+) is bound by residues Q110, H112, E137, and H276. R295 is a catalytic residue.

This sequence belongs to the mannose-6-phosphate isomerase type 1 family. Zn(2+) is required as a cofactor.

It is found in the cytoplasm. It carries out the reaction D-mannose 6-phosphate = D-fructose 6-phosphate. It functions in the pathway nucleotide-sugar biosynthesis; GDP-alpha-D-mannose biosynthesis; alpha-D-mannose 1-phosphate from D-fructose 6-phosphate: step 1/2. Its function is as follows. Isomerase that catalyzes the interconversion of fructose-6-P and mannose-6-P and has a critical role in the supply of D-mannose derivatives required for many eukaryotic glycosylation reactions. This chain is Mannose-6-phosphate isomerase (MPI), found in Macaca fascicularis (Crab-eating macaque).